Here is a 520-residue protein sequence, read N- to C-terminus: Fusaridione A cluster transcription factor fsdR (520 aa).

The interval 1 to 30 is disordered; the sequence is MSTGPPSGISLVSMTTPRKSGQHTPESWSK.

It localises to the nucleus. Its function is as follows. Transcription factor that regulates the expression of the gene cluster that mediates the biosynthesis of fusaridione A. The polypeptide is Fusaridione A cluster transcription factor fsdR (Fusarium heterosporum).